The sequence spans 146 residues: 3-hydroxyacyl-[acyl-carrier-protein] dehydratase FabZ (146 aa).

His-49 is an active-site residue.

It belongs to the thioester dehydratase family. FabZ subfamily.

Its subcellular location is the cytoplasm. It catalyses the reaction a (3R)-hydroxyacyl-[ACP] = a (2E)-enoyl-[ACP] + H2O. Functionally, involved in unsaturated fatty acids biosynthesis. Catalyzes the dehydration of short chain beta-hydroxyacyl-ACPs and long chain saturated and unsaturated beta-hydroxyacyl-ACPs. This Pseudomonas fluorescens (strain Pf0-1) protein is 3-hydroxyacyl-[acyl-carrier-protein] dehydratase FabZ.